Here is a 207-residue protein sequence, read N- to C-terminus: Guanylate kinase (207 aa).

In terms of domain architecture, Guanylate kinase-like spans 5–184 (GNLFIVSAPS…ALADLVAIIR (180 aa)). An ATP-binding site is contributed by 12-19 (APSGAGKS).

It belongs to the guanylate kinase family.

The protein resides in the cytoplasm. The catalysed reaction is GMP + ATP = GDP + ADP. Its function is as follows. Essential for recycling GMP and indirectly, cGMP. This Shewanella violacea (strain JCM 10179 / CIP 106290 / LMG 19151 / DSS12) protein is Guanylate kinase.